A 540-amino-acid polypeptide reads, in one-letter code: CTP synthase (540 aa).

Residues 1–266 are amidoligase domain; the sequence is MAVKYIFVTG…LTPIARHLEL (266 aa). Position 14 (serine 14) interacts with CTP. Serine 14 contacts UTP. ATP is bound by residues 15 to 20 and aspartate 72; that span reads SLGKGI. Residues aspartate 72 and glutamate 140 each coordinate Mg(2+). CTP contacts are provided by residues 147–149, 187–192, and lysine 223; these read DIE and KTKPTQ. Residues 187-192 and lysine 223 contribute to the UTP site; that span reads KTKPTQ. Residues 291–540 enclose the Glutamine amidotransferase type-1 domain; it reads TIGFVGKYLS…VKETLAHKKT (250 aa). Glycine 351 provides a ligand contact to L-glutamine. Residue cysteine 378 is the Nucleophile; for glutamine hydrolysis of the active site. Residues 379–382, glutamate 402, and arginine 470 each bind L-glutamine; that span reads LGMQ. Residues histidine 513 and glutamate 515 contribute to the active site.

This sequence belongs to the CTP synthase family. As to quaternary structure, homotetramer.

The enzyme catalyses UTP + L-glutamine + ATP + H2O = CTP + L-glutamate + ADP + phosphate + 2 H(+). The catalysed reaction is L-glutamine + H2O = L-glutamate + NH4(+). It catalyses the reaction UTP + NH4(+) + ATP = CTP + ADP + phosphate + 2 H(+). The protein operates within pyrimidine metabolism; CTP biosynthesis via de novo pathway; CTP from UDP: step 2/2. Allosterically activated by GTP, when glutamine is the substrate; GTP has no effect on the reaction when ammonia is the substrate. The allosteric effector GTP functions by stabilizing the protein conformation that binds the tetrahedral intermediate(s) formed during glutamine hydrolysis. Inhibited by the product CTP, via allosteric rather than competitive inhibition. Functionally, catalyzes the ATP-dependent amination of UTP to CTP with either L-glutamine or ammonia as the source of nitrogen. Regulates intracellular CTP levels through interactions with the four ribonucleotide triphosphates. In Helicobacter hepaticus (strain ATCC 51449 / 3B1), this protein is CTP synthase.